Here is a 496-residue protein sequence, read N- to C-terminus: 2-methylcitrate dehydratase-like protein oryR (496 aa).

This sequence belongs to the PrpD family.

Its pathway is secondary metabolite biosynthesis. Its function is as follows. 2-methylcitrate dehydratase-like protein; part of the gene cluster that mediates the biosynthesis of oryzines, natural products with an unusual maleidride backbone. The two subunits of the fungal fatty acid synthase oryfasA and oryfasB probably form octenoic acid. This fatty acid is most likely activated by the acyl-CoA ligase oryP to give octenyl-CoA before the citrate synthase-like protein oryE catalyzes condensation with oxaloacetate to form tricarboxylic acid. The next steps of the pathways are conjectural, but a favorite possible route has been proposed, beginning with decarboxylation and concomitant dehydration by the decarboxylase oryM, followed by tautomerization, which may lead to the production of a diene intermediate. Reduction of this diene intermediate could give the known metabolite piliformic acid. On the pathway to oryzine B and oryzine A, however, hydroxylation of the diene by the alpha-ketoglutarate-dependent dioxygenase oryG and lactonisation by the lactonohydrolases oryH or oryL could give oryzine B directly. Finally, enoyl reduction by the dehydrogenase oryD would then convert oryzine B into oryzine A. This chain is 2-methylcitrate dehydratase-like protein oryR, found in Aspergillus oryzae (strain ATCC 42149 / RIB 40) (Yellow koji mold).